We begin with the raw amino-acid sequence, 1713 residues long: uncharacterized protein (1713 aa).

Over residues 1 to 12 the composition is skewed to polar residues; the sequence is MNENEFSTNSLI. 7 disordered regions span residues 1 to 35, 79 to 200, 226 to 290, 309 to 557, 713 to 734, 808 to 952, and 1143 to 1190; these read MNENEFSTNSLINQQGTNNNNNNNTNNNITNINFG, QQLN…KLSN, GNNN…QPLS, QYLS…PMSH, SNDQNDRVPIHQLGGATGKKDR, SPPM…SITT, and HHHH…SISR. Composition is skewed to low complexity over residues 13-35, 79-109, 126-170, 177-200, and 226-264; these read NQQGTNNNNNNNTNNNITNINFG, QQLNTPPTTPNTSTPSTPTSSRNNNNNNNNN, NNSG…NSGN, NMSDITNDNSNSSSNAGSNSKLSN, and GNNNYHNGNNENGNNTFHVGNNLNNNNNNNNIGSSGGNN. The segment covering 265–276 has biased composition (basic residues); it reads SHHHHNHSHHNS. Low complexity-rich tracts occupy residues 317–470 and 478–489; these read NNIN…SPAS and SNNFGGNHNNYN. The span at 490–504 shows a compositional bias: basic residues; that stretch reads HAHHSHHNNHAHHNT. A compositionally biased stretch (low complexity) spans 505 to 553; it reads HNYNNNNNNNNNNNNNNNNNNNNSNNSNNNSNTNNNGNNGNNSNNNNNH. The segment at residues 544-825 is a DNA-binding region (NDT80); sequence GNNSNNNNNH…QNPGRFLNHD (282 aa). Basic and acidic residues predominate over residues 822-832; the sequence is LNHDKSLKKDP. Gly residues predominate over residues 838–874; the sequence is GGKGGGGSGSGGMGGGMGGGMGNNGSSGSSSNGGYGN. 2 stretches are compositionally biased toward low complexity: residues 898–946 and 1148–1189; these read SPTT…PTLT and QQQQ…SSIS. The 116-residue stretch at 1240–1355 folds into the Peptidase S74 domain; that stretch reads SDQRIKSNIR…RSLKKEKDHI (116 aa). Transmembrane regions (helical) follow at residues 1416-1436, 1447-1467, and 1473-1493; these read TMFVFGFFIPICWIIGSFYLF, LMNFVATIIFILALSLMTFYV, and LIIAPALIVMGFVVCILVGFF. Positions 1596–1605 are enriched in low complexity; that stretch reads NSNNNINNNN. Disordered regions lie at residues 1596 to 1634 and 1646 to 1665; these read NSNNNINNNNQERLSDSSKSSFIDDFKKSSSNNHKDFHE and IKGKKQSSSSAKTRSLSSSN. Over residues 1617–1634 the composition is skewed to basic and acidic residues; that stretch reads FIDDFKKSSSNNHKDFHE.

It localises to the membrane. This is an uncharacterized protein from Dictyostelium discoideum (Social amoeba).